The chain runs to 676 residues: MGVTGILQLPRDRFKRTSFFLWVIILFQRTFSIPLGVIHNSTLQVSDVDKLVCRDKLSSTNQLRSVGLNLEGNGVATDVPSATKRWGFRSGVPPKVVNYEAGEWAENCYNLEIKKPDGSECLPAAPDGIRGFPRCRYVHKVSGTGPCAGDFAFHKEGAFFLYDRLASTVIYRGTTFAEGVVAFLILPQAKKDFFSSHPLREPVNATEDPSSGYYSTTIRYQATGFGTNETEYLFEVDNLTYVQLESRFTPQFLLQLNETRYTSGKRSNTTGKLIWKVNPEIDTTIGEWAFWETKKNLTRKIRSEELSFTAVSNRAKNISGQSPARTSSDPGTNTTTEDHKIMASENSSAMVQVHSQGREAAVSHLTTLATISTSLRPPITKPGPDNSTHNTPVYKLDISEATQVEQHHRRTDNASTTSDTPPATTAAGPLKAENTNTSKGTDLLDPATTTSPQNHSETAGNNNTHHQDTGEESASSGKLGLITNTIAGVAGLITGGRRTRREAIVNAQPKCNPNLHYWTTQDEGAAIGLAWIPYFGPAAEGIYIEGLMHNQDGLICGLRQLANETTQALQLFLRATTELRTFSILNRKAIDFLLQRWGGTCHILGPDCCIEPHDWTKNITDKIDQIIHDFVDKTLPDQGDNDNWWTGWRQWIPAGIGVTGVIIAVIALFCICKFVF.

The first 32 residues, 1–32 (MGVTGILQLPRDRFKRTSFFLWVIILFQRTFS), serve as a signal peptide directing secretion. Topologically, residues 33-650 (IPLGVIHNST…NDNWWTGWRQ (618 aa)) are extracellular. The N-linked (GlcNAc...) asparagine; by host glycan is linked to Asn40. Cystine bridges form between Cys53–Cys609, Cys108–Cys135, Cys121–Cys147, Cys511–Cys556, and Cys601–Cys608. The tract at residues 54 to 201 (RDKLSSTNQL…DFFSSHPLRE (148 aa)) is receptor-binding. Asn204, Asn228, Asn238, Asn257, Asn268, Asn296, Asn317, Asn333, Asn346, Asn386, and Asn413 each carry an N-linked (GlcNAc...) asparagine; by host glycan. The interval 305 to 485 (ELSFTAVSNR…SGKLGLITNT (181 aa)) is mucin-like region. A compositionally biased stretch (polar residues) spans 314–335 (RAKNISGQSPARTSSDPGTNTT). Positions 314–337 (RAKNISGQSPARTSSDPGTNTTTE) are disordered. Disordered regions lie at residues 373 to 392 (TSLR…HNTP) and 402 to 479 (TQVE…SGKL). A compositionally biased stretch (low complexity) spans 414–427 (ASTTSDTPPATTAA). 3 N-linked (GlcNAc...) asparagine; by host glycosylation sites follow: Asn436, Asn454, and Asn462. The span at 447-464 (ATTTSPQNHSETAGNNNT) shows a compositional bias: polar residues. The tract at residues 524–539 (GAAIGLAWIPYFGPAA) is fusion peptide. The stretch at 554 to 595 (LICGLRQLANETTQALQLFLRATTELRTFSILNRKAIDFLLQ) forms a coiled coil. N-linked (GlcNAc...) asparagine; by host glycosylation occurs at Asn563. Residues 615–634 (WTKNITDKIDQIIHDFVDKT) are a coiled coil. Asn618 is a glycosylation site (N-linked (GlcNAc...) asparagine; by host). The chain crosses the membrane as a helical span at residues 651–671 (WIPAGIGVTGVIIAVIALFCI). Residues Cys670 and Cys672 are each lipidated (S-palmitoyl cysteine; by host). Residues 672–676 (CKFVF) are Cytoplasmic-facing.

Belongs to the filoviruses glycoprotein family. In terms of assembly, homotrimer; each monomer consists of a GP1 and a GP2 subunit linked by disulfide bonds. The resulting peplomers (GP1,2) protrude from the virus surface as spikes. Interacts with host integrin alpha-V/ITGAV. Interacts with host CLEC10A. Binds also to host CD209 and CLEC4M/DC-SIGN(R). Interacts with host FOLR1. Interacts with BST2; this interaction inhibits the antiviral effect of BST2 and this allows viral release from infected cells. Interacts with host FCN1; this interaction enhances viral entry. Interacts with host TLR4; this interaction induces cell death in T-lymphocytes or proinflammatory cytokines and SOCS1 production in monocytes. As to quaternary structure, interacts with host entry receptor NPC1. GP1 and GP2delta are part of GP1,2delta soluble complexes released by ectodomain shedding. The signal peptide region modulates GP's high mannose glycosylation, thereby determining the efficiency of the interactions with DC-SIGN(R). In terms of processing, N-glycosylated. Post-translationally, O-glycosylated in the mucin-like region. Palmitoylation of GP2 is not required for its function. In terms of processing, specific enzymatic cleavages in vivo yield mature proteins. The precursor is processed into GP1 and GP2 by host cell furin in the trans Golgi, and maybe by other host proteases, to yield the mature GP1 and GP2 proteins. The cleavage site corresponds to the furin optimal cleavage sequence [KR]-X-[KR]-R. This cleavage does not seem to be required for function. After the internalization of the virus into cell endosomes, GP1 C-terminus is removed by the endosomal proteases cathepsin B, cathepsin L, or both, leaving a 19-kDa N-terminal fragment which is further digested by cathepsin B. Proteolytic processing of GP1,2 by host ADAM17 can remove the transmembrane anchor of GP2 and leads to shedding of complexes consisting in GP1 and truncated GP2 (GP1,2delta).

The protein resides in the virion membrane. It localises to the host cell membrane. The protein localises to the secreted. Its function is as follows. Trimeric GP1,2 complexes form the virion surface spikes and mediate the viral entry processes, with GP1 acting as the receptor-binding subunit and GP2 as the membrane fusion subunit. At later times of infection, down-regulates the expression of various host cell surface molecules that are essential for immune surveillance and cell adhesion. Down-modulates several integrins including ITGA1, ITGA2, ITGA3, ITGA4, ITGA5, ITGA6, ITGAV and ITGB1. This decrease in cell adhesion molecules may lead to cell detachment, contributing to the disruption of blood vessel integrity and hemorrhages developed during infection (cytotoxicity). Interacts with host TLR4 and thereby stimulates the differentiation and activation of monocytes leading to bystander death of T-lymphocytes. Down-regulates as well the function of host natural killer cells. Counteracts the antiviral effect of host BST2/tetherin that restricts release of progeny virions from infected cells. However, cooperates with VP40 and host BST2 to activate canonical NF-kappa-B pathway in a manner dependent on neddylation. In terms of biological role, functions as a decoy for anti-GP1,2 antibodies thereby contributing to viral immune evasion. Interacts and activates host macrophages and dendritic cells inducing up-regulation of cytokine transcription. This effect is mediated throught activation of host TLR4. Functionally, responsible for binding to the receptor(s) on target cells. Interacts with CD209/DC-SIGN and CLEC4M/DC-SIGNR which act as cofactors for virus entry into dendritic cells (DCs) and endothelial cells. Binding to the macrophage specific lectin CLEC10A also seems to enhance virus infectivity. Interaction with FOLR1/folate receptor alpha may be a cofactor for virus entry in some cell types, although results are contradictory. Members of the Tyro3 receptor tyrosine kinase family also seem to be cell entry factors in filovirus infection. Once attached, the virions are internalized through clathrin-dependent endocytosis and/or macropinocytosis. After internalization of the virus into the endosomes of the host cell, proteolysis of GP1 by two cysteine proteases, CTSB/cathepsin B and CTSL/cathepsin L removes the glycan cap and allows GP1 binding to the host entry receptor NPC1. NPC1-binding, Ca(2+) and acidic pH induce a conformational change of GP2, which unmasks its fusion peptide and permit membranes fusion. Acts as a class I viral fusion protein. Under the current model, the protein has at least 3 conformational states: pre-fusion native state, pre-hairpin intermediate state, and post-fusion hairpin state. During viral and target cell membrane fusion, the coiled coil regions (heptad repeats) assume a trimer-of-hairpins structure, positioning the fusion peptide in close proximity to the C-terminal region of the ectodomain. The formation of this structure appears to drive apposition and subsequent fusion of viral and target cell membranes. Responsible for penetration of the virus into the cell cytoplasm by mediating the fusion of the membrane of the endocytosed virus particle with the endosomal membrane. Low pH in endosomes induces an irreversible conformational change in GP2, releasing the fusion hydrophobic peptide. The sequence is that of Envelope glycoprotein (GP) from Epomops franqueti (Franquet's epauletted fruit bat).